A 309-amino-acid chain; its full sequence is Cytidine deaminase (309 aa).

2 consecutive CMP/dCMP-type deaminase domains span residues Asp48–Arg168 and Asp200–Leu309. Asn89–Glu91 contributes to the substrate binding site. Residue His102 coordinates Zn(2+). Glu104 (proton donor) is an active-site residue. Cys129 and Cys132 together coordinate Zn(2+).

The protein belongs to the cytidine and deoxycytidylate deaminase family. Homodimer. Zn(2+) serves as cofactor.

It carries out the reaction cytidine + H2O + H(+) = uridine + NH4(+). The catalysed reaction is 2'-deoxycytidine + H2O + H(+) = 2'-deoxyuridine + NH4(+). This enzyme scavenges exogenous and endogenous cytidine and 2'-deoxycytidine for UMP synthesis. The protein is Cytidine deaminase of Sodalis glossinidius (strain morsitans).